The sequence spans 397 residues: Metal tolerance protein 4 (397 aa).

Positions 1–19 are enriched in basic and acidic residues; it reads MEAKGENDARAPLLAERRR. The segment at 1–27 is disordered; that stretch reads MEAKGENDARAPLLAERRRNSVGSMRG. The Cytoplasmic segment spans residues 1-104; the sequence is MEAKGENDAR…EQKQSEFAMK (104 aa). Residues 105–122 form a helical membrane-spanning segment; the sequence is ISNYANMILLALKIYATI. Topologically, residues 123–126 are vacuolar; it reads KSGS. A helical transmembrane segment spans residues 127-147; sequence IAIAASTLDSLLDLMAGGILW. At 148–170 the chain is on the cytoplasmic side; sequence FTHLSMKSINVYKYPIGKLRVQP. The helical transmembrane segment at 171–191 threads the bilayer; that stretch reads VGIIIFAAVMATLGFQVFVQA. The Vacuolar segment spans residues 192–208; that stretch reads VEKLIVNETPDKLTPVQ. A helical transmembrane segment spans residues 209 to 229; it reads LTWLYSIMIFATVVKLALWLY. The Cytoplasmic segment spans residues 230-248; it reads CRTSGNKIVRAYAKDHYFD. The helical transmembrane segment at 249–269 threads the bilayer; it reads VVTNVVGLAAAVLGDMFYWWI. Residue aspartate 270 is a topological domain, vacuolar. Residues 271 to 291 traverse the membrane as a helical segment; sequence PVGAIALAVYTITNWSGTVWE. Over 292 to 397 the chain is Cytoplasmic; it reads NAVSLVGESA…ILSKLPSSQP (106 aa).

The protein belongs to the cation diffusion facilitator (CDF) transporter (TC 2.A.4) family. SLC30A subfamily.

It localises to the vacuole membrane. Functionally, involved in sequestration of excess metal in the cytoplasm into vacuoles to maintain metal homeostasis. The sequence is that of Metal tolerance protein 4 (MTP4) from Oryza sativa subsp. japonica (Rice).